We begin with the raw amino-acid sequence, 126 residues long: Protein ApaG (126 aa).

The ApaG domain occupies 2 to 126; that stretch reads SDPRYQVDVS…FRLAVPGALH (125 aa).

In Pseudomonas fluorescens (strain ATCC BAA-477 / NRRL B-23932 / Pf-5), this protein is Protein ApaG.